The primary structure comprises 359 residues: tRNA-specific 2-thiouridylase MnmA (359 aa).

ATP-binding positions include 9–16 (GISGGVDS) and M35. The interval 95–97 (NPD) is interaction with target base in tRNA. Catalysis depends on C100, which acts as the Nucleophile. A disulfide bond links C100 and C197. G124 serves as a coordination point for ATP. The tract at residues 147–149 (KDQ) is interaction with tRNA. The active-site Cysteine persulfide intermediate is the C197. The segment at 309 to 310 (RY) is interaction with tRNA.

Belongs to the MnmA/TRMU family.

It localises to the cytoplasm. The enzyme catalyses S-sulfanyl-L-cysteinyl-[protein] + uridine(34) in tRNA + AH2 + ATP = 2-thiouridine(34) in tRNA + L-cysteinyl-[protein] + A + AMP + diphosphate + H(+). Catalyzes the 2-thiolation of uridine at the wobble position (U34) of tRNA, leading to the formation of s(2)U34. The polypeptide is tRNA-specific 2-thiouridylase MnmA (Francisella tularensis subsp. tularensis (strain WY96-3418)).